A 399-amino-acid polypeptide reads, in one-letter code: Lovastatin esterase (399 aa).

The active-site Nucleophile is the Ser-57. Catalysis depends on proton acceptor residues Lys-60 and Tyr-170.

It belongs to the class-A beta-lactamase family.

It catalyses the reaction lovastatin + H2O = monacolin J + (S)-2-methylbutanoate + H(+). The enzyme catalyses pravastatin lactone + H2O = pravastatin diol lactone + (S)-2-methylbutanoate + H(+). It carries out the reaction mevastatin + H2O = compactin diol lactone + (S)-2-methylbutanoate + H(+). Its function is as follows. Esterase that can hydrolyze the side chain of lovastatin to produce monacolin J. Is also able to hydrolyze the side chains of mevastatin and pravastatin, but not simvastatin. The protein is Lovastatin esterase of Penicillium rubens (strain ATCC 28089 / DSM 1075 / NRRL 1951 / Wisconsin 54-1255) (Penicillium chrysogenum).